The following is a 270-amino-acid chain: uncharacterized protein (270 aa).

Positions 1-22 (MEYIKKIALYMSVLLLIIFIGG) are cleaved as a signal peptide. The N-palmitoyl cysteine moiety is linked to residue C23. Residue C23 is the site of S-diacylglycerol cysteine attachment.

The protein belongs to the staphylococcal tandem lipoprotein family.

It is found in the cell membrane. This is an uncharacterized protein from Staphylococcus aureus (strain N315).